The chain runs to 241 residues: MTKVITDPRSIRIKGRSFLAVMLSPDLPFDNWLIRLDDLAARSAGFFLGRPVVLDVTDLPIDRSQLKELIAELGQRNVSIMGIEGARPSILGPGMPAALKGGRAVSDFEVPEKEPTIELRSQPATVPEARPSVQSITIREPVRSGQSVIFPEGDVTVVGSVASGAEIVAGGSIHIYGTLRGRAMAGSLGKASAHIFCRKLEAELVAIDGIYKMAEDMPANLRGQAVQLWLEGDAIKAEKLI.

It belongs to the MinC family. Interacts with MinD and FtsZ.

Its function is as follows. Cell division inhibitor that blocks the formation of polar Z ring septums. Rapidly oscillates between the poles of the cell to destabilize FtsZ filaments that have formed before they mature into polar Z rings. Prevents FtsZ polymerization. This Rhizobium rhizogenes (strain K84 / ATCC BAA-868) (Agrobacterium radiobacter) protein is Probable septum site-determining protein MinC.